The following is a 79-amino-acid chain: Acyl carrier protein (79 aa).

The Carrier domain maps to 2–77 (STIEERVKKI…QAIDYVKVHV (76 aa)). An O-(pantetheine 4'-phosphoryl)serine modification is found at S37.

The protein belongs to the acyl carrier protein (ACP) family. 4'-phosphopantetheine is transferred from CoA to a specific serine of apo-ACP by AcpS. This modification is essential for activity because fatty acids are bound in thioester linkage to the sulfhydryl of the prosthetic group.

It localises to the cytoplasm. It functions in the pathway lipid metabolism; fatty acid biosynthesis. Functionally, carrier of the growing fatty acid chain in fatty acid biosynthesis. The polypeptide is Acyl carrier protein (Xanthomonas albilineans).